Here is a 314-residue protein sequence, read N- to C-terminus: Cytochrome c biogenesis protein CcsA (314 aa).

The next 8 membrane-spanning stretches (helical) occupy residues 15–35, 48–68, 73–93, 102–122, 148–168, 216–236, 250–267, and 277–297; these read VSFIGILIFYFLLINLPISLI, LITILINLFIALQLISRWIIS, ISNLYESLYFLVWGITLGQLL, IIPAIAIPIELLTIAFACFVL, VMLSYAALIMGSLLSASVLFI, SILVGFVLLTLGLITGAIWAN, TWAFISWLFYAAYLHMRI, and ALLATSGFFVVLICYIGVNFL.

It belongs to the CcmF/CycK/Ccl1/NrfE/CcsA family. In terms of assembly, may interact with ccs1.

It localises to the cellular thylakoid membrane. Required during biogenesis of c-type cytochromes (cytochrome c6 and cytochrome f) at the step of heme attachment. This chain is Cytochrome c biogenesis protein CcsA, found in Prochlorococcus marinus subsp. pastoris (strain CCMP1986 / NIES-2087 / MED4).